The sequence spans 148 residues: Snaclec B1 (148 aa).

A signal peptide spans 1–24 (MGRIIFVSFGLLVVFLSLSGTGAA). 3 cysteine pairs are disulfide-bonded: Cys27-Cys38, Cys55-Cys144, and Cys121-Cys136. A C-type lectin domain is found at 34-145 (YDQHCYKVFD…CRLLGHFVCK (112 aa)).

Belongs to the snaclec family. Heterodimer; disulfide-linked. As to expression, expressed by the venom gland.

It is found in the secreted. Functionally, interferes with one step of hemostasis (modulation of platelet aggregation, or coagulation cascade, for example). The protein is Snaclec B1 of Macrovipera lebetinus (Levantine viper).